The primary structure comprises 375 residues: Deoxyhypusine synthase-like protein (375 aa).

Belongs to the deoxyhypusine synthase family.

The polypeptide is Deoxyhypusine synthase-like protein (Elusimicrobium minutum (strain Pei191)).